The primary structure comprises 463 residues: Adenylosuccinate synthetase, chloroplastic (463 aa).

GTP-binding positions include 44 to 50 (GDEGKGK) and 72 to 74 (GHT). Asp45 acts as the Proton acceptor in catalysis. Residues Asp45 and Gly72 each coordinate Mg(2+). IMP contacts are provided by residues 45-48 (DEGK), 70-73 (NAGH), Thr164, Arg178, Asn256, Thr271, and Arg335. His73 functions as the Proton donor in the catalytic mechanism. 331–337 (TTTGRPR) provides a ligand contact to substrate. GTP-binding positions include Arg337, 363–365 (KLD), and 446–448 (GVG).

Belongs to the adenylosuccinate synthetase family. As to quaternary structure, homodimer. The cofactor is Mg(2+).

It localises to the plastid. The protein localises to the chloroplast. It carries out the reaction IMP + L-aspartate + GTP = N(6)-(1,2-dicarboxyethyl)-AMP + GDP + phosphate + 2 H(+). It functions in the pathway purine metabolism; AMP biosynthesis via de novo pathway; AMP from IMP: step 1/2. Its function is as follows. Plays an important role in the de novo pathway and in the salvage pathway of purine nucleotide biosynthesis. Catalyzes the first committed step in the biosynthesis of AMP from IMP. The chain is Adenylosuccinate synthetase, chloroplastic from Chlamydomonas reinhardtii (Chlamydomonas smithii).